Reading from the N-terminus, the 328-residue chain is N-acetyl-gamma-glutamyl-phosphate reductase (328 aa).

The active site involves C143.

This sequence belongs to the NAGSA dehydrogenase family. Type 1 subfamily.

The protein resides in the cytoplasm. It carries out the reaction N-acetyl-L-glutamate 5-semialdehyde + phosphate + NADP(+) = N-acetyl-L-glutamyl 5-phosphate + NADPH + H(+). Its pathway is amino-acid biosynthesis; L-arginine biosynthesis; N(2)-acetyl-L-ornithine from L-glutamate: step 3/4. Catalyzes the NADPH-dependent reduction of N-acetyl-5-glutamyl phosphate to yield N-acetyl-L-glutamate 5-semialdehyde. The polypeptide is N-acetyl-gamma-glutamyl-phosphate reductase (Methanoregula boonei (strain DSM 21154 / JCM 14090 / 6A8)).